The primary structure comprises 108 residues: MDLFECINVADAHQKLQEKEAVLVDIRDPQSFAMGHAVQAFHLTNDTLGAFMRDNDFDTPVMVMCYHGNSSKGAAQYLLQQGYDVVYSIDGGFEAWQRQFPAEVAYGA.

One can recognise a Rhodanese domain in the interval 17-105 (QEKEAVLVDI…WQRQFPAEVA (89 aa)). Residue C65 is the Cysteine persulfide intermediate of the active site.

It belongs to the GlpE family.

It localises to the cytoplasm. The catalysed reaction is thiosulfate + hydrogen cyanide = thiocyanate + sulfite + 2 H(+). The enzyme catalyses thiosulfate + [thioredoxin]-dithiol = [thioredoxin]-disulfide + hydrogen sulfide + sulfite + 2 H(+). Its function is as follows. Transferase that catalyzes the transfer of sulfur from thiosulfate to thiophilic acceptors such as cyanide or dithiols. May function in a CysM-independent thiosulfate assimilation pathway by catalyzing the conversion of thiosulfate to sulfite, which can then be used for L-cysteine biosynthesis. The protein is Thiosulfate sulfurtransferase GlpE of Escherichia coli O8 (strain IAI1).